Here is a 162-residue protein sequence, read N- to C-terminus: Transcription elongation factor GreB (162 aa).

A coiled-coil region spans residues glycine 52 to isoleucine 76.

Belongs to the GreA/GreB family. GreB subfamily.

Necessary for efficient RNA polymerase transcription elongation past template-encoded arresting sites. The arresting sites in DNA have the property of trapping a certain fraction of elongating RNA polymerases that pass through, resulting in locked ternary complexes. Cleavage of the nascent transcript by cleavage factors such as GreA or GreB allows the resumption of elongation from the new 3'terminus. GreB releases sequences of up to 9 nucleotides in length. This is Transcription elongation factor GreB from Haemophilus ducreyi (strain 35000HP / ATCC 700724).